A 178-amino-acid polypeptide reads, in one-letter code: Probable DNA-directed RNA polymerase subunit delta (178 aa).

The HTH HARE-type domain maps to 14 to 81 (LSLIDVAHFI…GNNTWGLRAW (68 aa)). 2 disordered regions span residues 89–122 (EEVQTQTTPKKKRKSDDDDDEDEEILDDDVDYDD) and 141–178 (LDEDEDDDDHLPDGIEGDLATVEDDYTDGDYTEDPEDK). Composition is skewed to acidic residues over residues 105–122 (DDDDEDEEILDDDVDYDD), 141–150 (LDEDEDDDDH), and 161–178 (TVEDDYTDGDYTEDPEDK).

Belongs to the RpoE family. As to quaternary structure, RNAP is composed of a core of 2 alpha, a beta and a beta' subunits. The core is associated with a delta subunit and one of several sigma factors.

In terms of biological role, participates in both the initiation and recycling phases of transcription. In the presence of the delta subunit, RNAP displays an increased specificity of transcription, a decreased affinity for nucleic acids, and an increased efficiency of RNA synthesis because of enhanced recycling. The sequence is that of Probable DNA-directed RNA polymerase subunit delta from Listeria innocua serovar 6a (strain ATCC BAA-680 / CLIP 11262).